Reading from the N-terminus, the 193-residue chain is Ion-translocating oxidoreductase complex subunit A (193 aa).

The next 6 membrane-spanning stretches (helical) occupy residues 5-25 (LLLF…FLGL), 47-67 (FVIT…LLPL), 72-92 (LRTM…EMVV), 102-122 (LLGI…VPLL), 134-154 (AIYG…FAGV), and 171-191 (SIAL…AGLV).

It belongs to the NqrDE/RnfAE family. As to quaternary structure, the complex is composed of six subunits: RnfA, RnfB, RnfC, RnfD, RnfE and RnfG.

Its subcellular location is the cell inner membrane. Part of a membrane-bound complex that couples electron transfer with translocation of ions across the membrane. The sequence is that of Ion-translocating oxidoreductase complex subunit A from Erwinia tasmaniensis (strain DSM 17950 / CFBP 7177 / CIP 109463 / NCPPB 4357 / Et1/99).